A 464-amino-acid chain; its full sequence is MTNLKKRERAKTNASLISMVQRFSDITIMFAGLWLVCEVSGLSFLYMHLLVALITLVVFQMLGGITDFYRSWRGVRAATEFALLLQNWTLSVIFSAGLVAFNNDFDTQLKIWLAWYALTSIGLVVCRSCIRIGAGWLRNHGYNKRMVAVAGDLAAGQMLMESFRNQPWLGFEVVGVYHDPKPGGVSNDWAGNLQQLVEDAKAGKIHNVYIAMQMCDGARVKKLVHQLADTTCSVLLIPDVFTFNILHSRLEEMNGVPVVPLYDTPLSGVNRLLKRAEDIVLATLILLLISPVLCCIALAVKLSSPGPVIFRQTRYGMDGKPIKVWKFRSMKVMENDKVVTQATQNDPRVTKVGNFLRRTSLDELPQFINVLTGGMSIVGPRPHAVAHNEQYRQLIEGYMLRHKVKPGITGWAQINGWRGETDTLEKMEKRVEFDLEYIREWSVWFDIKIVFLTVFKGFVNKAAY.

Residues 1–15 (MTNLKKRERAKTNAS) lie on the Cytoplasmic side of the membrane. A helical transmembrane segment spans residues 16-36 (LISMVQRFSDITIMFAGLWLV). The Periplasmic segment spans residues 37-38 (CE). A helical transmembrane segment spans residues 39 to 59 (VSGLSFLYMHLLVALITLVVF). At 60-80 (QMLGGITDFYRSWRGVRAATE) the chain is on the cytoplasmic side. The chain crosses the membrane as a helical span at residues 81–101 (FALLLQNWTLSVIFSAGLVAF). The Periplasmic segment spans residues 102-104 (NND). The chain crosses the membrane as a helical span at residues 105 to 125 (FDTQLKIWLAWYALTSIGLVV). Residues 126 to 278 (CRSCIRIGAG…VNRLLKRAED (153 aa)) are Cytoplasmic-facing. Residues 279–299 (IVLATLILLLISPVLCCIALA) form a helical membrane-spanning segment. At 300-464 (VKLSSPGPVI…FKGFVNKAAY (165 aa)) the chain is on the periplasmic side.

This sequence belongs to the bacterial sugar transferase family.

The protein localises to the cell inner membrane. The catalysed reaction is di-trans,octa-cis-undecaprenyl phosphate + UDP-alpha-D-glucose = alpha-D-glucosyl di-trans,octa-cis-undecaprenyl diphosphate + UMP. It participates in exopolysaccharide biosynthesis; colanic acid biosynthesis. Is the initiating enzyme for colanic acid (CA) synthesis. Catalyzes the transfer of the glucose-1-phosphate moiety from UDP-Glc onto the carrier lipid undecaprenyl phosphate (C55-P), forming a phosphoanhydride bond yielding to glucosyl-pyrophosphoryl-undecaprenol (Glc-PP-C55). Also possesses a weak galactose-1-P transferase activity. This Escherichia coli (strain K12) protein is UDP-glucose:undecaprenyl-phosphate glucose-1-phosphate transferase (wcaJ).